The primary structure comprises 417 residues: Fructose-1,6-bisphosphatase 1, chloroplastic (417 aa).

The transit peptide at 1 to 59 directs the protein to the chloroplast; it reads MAATAATTTSSHLLLSSSRHVASSSQPSILSPRSLFSNNGKRAPTGVRNHQYASGVRCM. The span at 24-35 shows a compositional bias: low complexity; it reads SSQPSILSPRSL. The interval 24–48 is disordered; the sequence is SSQPSILSPRSLFSNNGKRAPTGVR. Residue alanine 60 is modified to N-acetylalanine. Mg(2+) contacts are provided by glutamate 138, glutamate 167, aspartate 188, leucine 190, and aspartate 191. 191-194 contributes to the substrate binding site; that stretch reads DGSS. Residues cysteine 233 and cysteine 238 are joined by a disulfide bond. Substrate contacts are provided by asparagine 297, tyrosine 329, tyrosine 347, tyrosine 349, and lysine 359. Residue glutamate 365 participates in Mg(2+) binding.

This sequence belongs to the FBPase class 1 family. Homotetramer. Requires Mg(2+) as cofactor.

It localises to the plastid. It is found in the chloroplast stroma. It catalyses the reaction beta-D-fructose 1,6-bisphosphate + H2O = beta-D-fructose 6-phosphate + phosphate. It participates in carbohydrate biosynthesis; Calvin cycle. Catalyzes the irreversible reaction from fructose-1,6-bisphosphate to fructose-6-phosphate and inorganic phosphate, to regenerate the primary CO(2) acceptor molecule, ribulose-1,5-bisphosphate. Involved in the regulation of photosynthetic electron flow and sucrose synthesis. Its activity is critical for normal plant development and important for the regulation of a wide range of metabolic processes. This is Fructose-1,6-bisphosphatase 1, chloroplastic from Arabidopsis thaliana (Mouse-ear cress).